The primary structure comprises 629 residues: tRNA uridine 5-carboxymethylaminomethyl modification enzyme MnmG (629 aa).

FAD-binding positions include 13 to 18 (GGGHAG), Val125, and Ser180. 273–287 (GPRYCPSIEDKVMRF) contacts NAD(+). Gln370 serves as a coordination point for FAD.

This sequence belongs to the MnmG family. In terms of assembly, homodimer. Heterotetramer of two MnmE and two MnmG subunits. It depends on FAD as a cofactor.

Its subcellular location is the cytoplasm. Its function is as follows. NAD-binding protein involved in the addition of a carboxymethylaminomethyl (cmnm) group at the wobble position (U34) of certain tRNAs, forming tRNA-cmnm(5)s(2)U34. The chain is tRNA uridine 5-carboxymethylaminomethyl modification enzyme MnmG from Escherichia coli O157:H7.